The chain runs to 543 residues: Chaperonin GroEL (543 aa).

Residues 29-32 (TVGP), 86-90 (DGTTT), Gly-413, and Asp-504 each bind ATP.

The protein belongs to the chaperonin (HSP60) family. As to quaternary structure, forms a cylinder of 14 subunits composed of two heptameric rings stacked back-to-back. Interacts with the co-chaperonin GroES.

It localises to the cytoplasm. The catalysed reaction is ATP + H2O + a folded polypeptide = ADP + phosphate + an unfolded polypeptide.. Together with its co-chaperonin GroES, plays an essential role in assisting protein folding. The GroEL-GroES system forms a nano-cage that allows encapsulation of the non-native substrate proteins and provides a physical environment optimized to promote and accelerate protein folding. This Mycoplasma genitalium (strain ATCC 33530 / DSM 19775 / NCTC 10195 / G37) (Mycoplasmoides genitalium) protein is Chaperonin GroEL.